A 235-amino-acid polypeptide reads, in one-letter code: Purine nucleoside phosphorylase DeoD-type (235 aa).

Position 4 (His4) interacts with a purine D-ribonucleoside. Residues Gly20, Arg24, Arg43, and 87–90 (RVGT) contribute to the phosphate site. A purine D-ribonucleoside contacts are provided by residues 179–181 (EME) and 203–204 (SD). The active-site Proton donor is the Asp204.

The protein belongs to the PNP/UDP phosphorylase family. In terms of assembly, homohexamer; trimer of homodimers.

The enzyme catalyses a purine D-ribonucleoside + phosphate = a purine nucleobase + alpha-D-ribose 1-phosphate. The catalysed reaction is a purine 2'-deoxy-D-ribonucleoside + phosphate = a purine nucleobase + 2-deoxy-alpha-D-ribose 1-phosphate. Functionally, catalyzes the reversible phosphorolytic breakdown of the N-glycosidic bond in the beta-(deoxy)ribonucleoside molecules, with the formation of the corresponding free purine bases and pentose-1-phosphate. The polypeptide is Purine nucleoside phosphorylase DeoD-type (Clostridium perfringens (strain SM101 / Type A)).